We begin with the raw amino-acid sequence, 244 residues long: Reticulon-like protein B7 (244 aa).

One can recognise a Reticulon domain in the interval 70–244 (PADVLLWRDK…EAKFLSKIPH (175 aa)). Transmembrane regions (helical) follow at residues 80–100 (KVTL…GFGG), 103–123 (LLTS…LWSN), and 172–192 (FVMA…FSFL).

Its subcellular location is the endoplasmic reticulum membrane. This Arabidopsis thaliana (Mouse-ear cress) protein is Reticulon-like protein B7 (RTNLB7).